We begin with the raw amino-acid sequence, 147 residues long: MYFFIFLKKGQHYLKSWPLESKLGMIFPENRVIKATLFAQKFMPFLAVFAITWQQVYAKSDISALAIAVFSAIVALLIPLQGLYWLGKRSITPLSPQSAVWFYEICERLKQVNETLPILTEQPNYQNLADVLKKAQRKLDKAFWQEL.

Helical transmembrane passes span 32-52 and 65-85; these read VIKA…FAIT and LAIA…GLYW.

This sequence belongs to the UPF0208 family.

The protein localises to the cell inner membrane. This chain is UPF0208 membrane protein PM0703, found in Pasteurella multocida (strain Pm70).